Here is a 181-residue protein sequence, read N- to C-terminus: 6,7-dimethyl-8-ribityllumazine synthase (181 aa).

5-amino-6-(D-ribitylamino)uracil-binding positions include Tyr27, 58–60 (ALE), and 87–89 (CVI). 92 to 93 (ET) serves as a coordination point for (2S)-2-hydroxy-3-oxobutyl phosphate. The active-site Proton donor is the His95. Asn120 serves as a coordination point for 5-amino-6-(D-ribitylamino)uracil. Arg134 contacts (2S)-2-hydroxy-3-oxobutyl phosphate.

Belongs to the DMRL synthase family.

It catalyses the reaction (2S)-2-hydroxy-3-oxobutyl phosphate + 5-amino-6-(D-ribitylamino)uracil = 6,7-dimethyl-8-(1-D-ribityl)lumazine + phosphate + 2 H2O + H(+). It participates in cofactor biosynthesis; riboflavin biosynthesis; riboflavin from 2-hydroxy-3-oxobutyl phosphate and 5-amino-6-(D-ribitylamino)uracil: step 1/2. Functionally, catalyzes the formation of 6,7-dimethyl-8-ribityllumazine by condensation of 5-amino-6-(D-ribitylamino)uracil with 3,4-dihydroxy-2-butanone 4-phosphate. This is the penultimate step in the biosynthesis of riboflavin. This is 6,7-dimethyl-8-ribityllumazine synthase from Methylobacterium nodulans (strain LMG 21967 / CNCM I-2342 / ORS 2060).